We begin with the raw amino-acid sequence, 458 residues long: Chromosomal replication initiator protein DnaA (458 aa).

Residues 1 to 84 (MENIWLEAQT…FHVAEEKPEA (84 aa)) form a domain I, interacts with DnaA modulators region. Residues 80-119 (EKPEAAHEAKPEKEAKPAREKERDKDKEKEKDREKEKKEL) are compositionally biased toward basic and acidic residues. The tract at residues 80–120 (EKPEAAHEAKPEKEAKPAREKERDKDKEKEKDREKEKKELV) is disordered. Positions 84–121 (AAHEAKPEKEAKPAREKERDKDKEKEKDREKEKKELVP) are domain II. A domain III, AAA+ region region spans residues 122–338 (NLNPKYTFES…GMLIRLEAFA (217 aa)). ATP-binding residues include G166, G168, K169, and T170. The segment at 339–458 (SLTGQEITLS…VEDIRKKLFT (120 aa)) is domain IV, binds dsDNA.

It belongs to the DnaA family. Oligomerizes as a right-handed, spiral filament on DNA at oriC.

The protein resides in the cytoplasm. Plays an essential role in the initiation and regulation of chromosomal replication. ATP-DnaA binds to the origin of replication (oriC) to initiate formation of the DNA replication initiation complex once per cell cycle. Binds the DnaA box (a 9 base pair repeat at the origin) and separates the double-stranded (ds)DNA. Forms a right-handed helical filament on oriC DNA; dsDNA binds to the exterior of the filament while single-stranded (ss)DNA is stabiized in the filament's interior. The ATP-DnaA-oriC complex binds and stabilizes one strand of the AT-rich DNA unwinding element (DUE), permitting loading of DNA polymerase. After initiation quickly degrades to an ADP-DnaA complex that is not apt for DNA replication. Binds acidic phospholipids. In Citrifermentans bemidjiense (strain ATCC BAA-1014 / DSM 16622 / JCM 12645 / Bem) (Geobacter bemidjiensis), this protein is Chromosomal replication initiator protein DnaA.